We begin with the raw amino-acid sequence, 63 residues long: Large ribosomal subunit protein uL29 (63 aa).

Belongs to the universal ribosomal protein uL29 family.

In Flavobacterium johnsoniae (strain ATCC 17061 / DSM 2064 / JCM 8514 / BCRC 14874 / CCUG 350202 / NBRC 14942 / NCIMB 11054 / UW101) (Cytophaga johnsonae), this protein is Large ribosomal subunit protein uL29.